The following is a 327-amino-acid chain: Methionyl-tRNA formyltransferase (327 aa).

121–124 (SLLP) contacts (6S)-5,6,7,8-tetrahydrofolate.

This sequence belongs to the Fmt family.

The catalysed reaction is L-methionyl-tRNA(fMet) + (6R)-10-formyltetrahydrofolate = N-formyl-L-methionyl-tRNA(fMet) + (6S)-5,6,7,8-tetrahydrofolate + H(+). In terms of biological role, attaches a formyl group to the free amino group of methionyl-tRNA(fMet). The formyl group appears to play a dual role in the initiator identity of N-formylmethionyl-tRNA by promoting its recognition by IF2 and preventing the misappropriation of this tRNA by the elongation apparatus. The polypeptide is Methionyl-tRNA formyltransferase (Burkholderia multivorans (strain ATCC 17616 / 249)).